The following is a 437-amino-acid chain: F-box/FBD/LRR-repeat protein At5g22700 (437 aa).

Positions 5 to 51 (GDRISSLPDELLCQILSNLPTKNAVTTSILSTRWRSIWLSTPVLDID) constitute an F-box domain. LRR repeat units lie at residues 86–113 (RDDV…EVDC), 134–160 (SLRL…HLEE), 161–186 (NIYY…TVVR), 187–210 (IVDI…KLVL), 215–240 (GWFI…SLKD), 272–297 (PVTF…TISG), and 322–350 (NARF…VLGL). Residues 361–406 (RVSSVPPCFLSSLEFVEIRSRLCRKRYVMKVARYFAKNSVMLKKFV) enclose the FBD domain.

The sequence is that of F-box/FBD/LRR-repeat protein At5g22700 from Arabidopsis thaliana (Mouse-ear cress).